A 410-amino-acid polypeptide reads, in one-letter code: E3 ubiquitin-protein ligase ICP0 (410 aa).

An RING-type zinc finger spans residues 46-85 (CPICLDVAATEAQTLPCMHKFCLDCIQRWTLTSTACPLCN). A disordered region spans residues 243–410 (TSESEAHSDS…IFIDLTQDDD (168 aa)). The span at 287–315 (APRRSPRRARRAAVLRREQRRTRCLRRGR) shows a compositional bias: basic residues. Low complexity-rich tracts occupy residues 329-340 (SSGEGSSAQHGA) and 348-399 (GSAN…PRSA).

In terms of processing, auto-ubiquitinated.

It catalyses the reaction S-ubiquitinyl-[E2 ubiquitin-conjugating enzyme]-L-cysteine + [acceptor protein]-L-lysine = [E2 ubiquitin-conjugating enzyme]-L-cysteine + N(6)-ubiquitinyl-[acceptor protein]-L-lysine.. Evades nuclear antiviral defenses triggered by dsDNA viruses. Acts during the initial stages of lytic infection and the reactivation of latent viral genome. Prevents the antiviral effect of nuclear bodies by degrading host PML and SP100. This chain is E3 ubiquitin-protein ligase ICP0 (EP0), found in Sus scrofa (Pig).